The sequence spans 585 residues: Amyloid protein-binding protein 2 (585 aa).

8 TPR repeats span residues 50 to 83 (QGRL…HHCF), 120 to 153 (IQVG…CTLH), 206 to 239 (AALY…ITSG), 288 to 321 (SDTL…RQSV), 333 to 367 (HEDL…ITHI), 429 to 462 (AKHY…KEQL), 471 to 505 (ALSV…GKKL), and 514 to 547 (EYDY…NRLR).

In terms of assembly, component of a CRL2 E3 ubiquitin-protein ligase complex, also named ECS (Elongin BC-CUL2/5-SOCS-box protein) complex, composed of CUL2, Elongin BC (ELOB and ELOC), RBX1 and substrate-specific adapter APPBP2. Interacts with APP; APP interaction inhibits the E3 ubiquitin-protein ligase activity of the CRL2(APPBP2) complex. Rapidly degraded by the proteasome upon overexpression of a C-terminal fragment of APP.

The protein localises to the nucleus. The protein resides in the cytoplasm. Its subcellular location is the cytoskeleton. It localises to the membrane. Its pathway is protein modification; protein ubiquitination. Its activity is regulated as follows. E3 ubiquitin-protein ligase activity of the CRL2(APPBP2) complex is inhibited by APP. Its function is as follows. Substrate-recognition component of a Cul2-RING (CRL2) E3 ubiquitin-protein ligase complex of the DesCEND (destruction via C-end degrons) pathway, which recognizes a C-degron located at the extreme C terminus of target proteins, leading to their ubiquitination and degradation. The C-degron recognized by the DesCEND pathway is usually a motif of less than ten residues and can be present in full-length proteins, truncated proteins or proteolytically cleaved forms. The CRL2(APPBP2) complex specifically recognizes proteins with a -Arg-Xaa-Xaa-Gly degron at the C-terminus, leading to their ubiquitination and degradation. The CRL2(APPBP2) complex mediates ubiquitination and degradation of truncated SELENOV selenoproteins produced by failed UGA/Sec decoding, which end with a -Arg-Xaa-Xaa-Gly degron. May play a role in intracellular protein transport: may be involved in the translocation of APP along microtubules toward the cell surface. In Rattus norvegicus (Rat), this protein is Amyloid protein-binding protein 2.